Consider the following 74-residue polypeptide: Pelophylaxin-2 (74 aa).

The first 22 residues, 1-22, serve as a signal peptide directing secretion; sequence MFTMKKSLLFFFFLGTIALSLC. A propeptide spanning residues 23 to 42 is cleaved from the precursor; it reads EEERGADEEENGAEITDEEV. C68 and C74 form a disulfide bridge.

Expressed by the skin glands.

The protein localises to the secreted. Its function is as follows. Antimicrobial peptide. This Pelophylax fukienensis (Fukien gold-striped pond frog) protein is Pelophylaxin-2.